A 234-amino-acid chain; its full sequence is Sugar fermentation stimulation protein homolog (234 aa).

Belongs to the SfsA family.

The sequence is that of Sugar fermentation stimulation protein homolog from Enterobacter sp. (strain 638).